The following is a 426-amino-acid chain: Serine--tRNA ligase (426 aa).

Position 227–229 (227–229) interacts with L-serine; sequence TSE. ATP is bound by residues 258–260 and Val274; that span reads RKE. Glu281 contributes to the L-serine binding site. 345–348 is an ATP binding site; the sequence is ELTS. Thr380 lines the L-serine pocket.

The protein belongs to the class-II aminoacyl-tRNA synthetase family. Type-1 seryl-tRNA synthetase subfamily. Homodimer. The tRNA molecule binds across the dimer.

It is found in the cytoplasm. It carries out the reaction tRNA(Ser) + L-serine + ATP = L-seryl-tRNA(Ser) + AMP + diphosphate + H(+). The catalysed reaction is tRNA(Sec) + L-serine + ATP = L-seryl-tRNA(Sec) + AMP + diphosphate + H(+). It participates in aminoacyl-tRNA biosynthesis; selenocysteinyl-tRNA(Sec) biosynthesis; L-seryl-tRNA(Sec) from L-serine and tRNA(Sec): step 1/1. Catalyzes the attachment of serine to tRNA(Ser). Is also able to aminoacylate tRNA(Sec) with serine, to form the misacylated tRNA L-seryl-tRNA(Sec), which will be further converted into selenocysteinyl-tRNA(Sec). This chain is Serine--tRNA ligase, found in Clavibacter michiganensis subsp. michiganensis (strain NCPPB 382).